The chain runs to 495 residues: Glutamate--tRNA ligase (495 aa).

A 'HIGH' region motif is present at residues 12 to 22; that stretch reads PSPTGHLHIGN. The short motif at 259–263 is the 'KMSKS' region element; it reads KLSKR. Lys262 contacts ATP.

This sequence belongs to the class-I aminoacyl-tRNA synthetase family. Glutamate--tRNA ligase type 1 subfamily. In terms of assembly, monomer.

The protein localises to the cytoplasm. The enzyme catalyses tRNA(Glu) + L-glutamate + ATP = L-glutamyl-tRNA(Glu) + AMP + diphosphate. In terms of biological role, catalyzes the attachment of glutamate to tRNA(Glu) in a two-step reaction: glutamate is first activated by ATP to form Glu-AMP and then transferred to the acceptor end of tRNA(Glu). This is Glutamate--tRNA ligase from Ligilactobacillus salivarius (strain UCC118) (Lactobacillus salivarius).